We begin with the raw amino-acid sequence, 511 residues long: MLADILIPLIKKNWMAFVYFTPVLFVVLYLLKEWRAAYGFNNLGQTVAAPFGYERKTLPYNKENCARTKFLDGKSLSIKNRDQCGDLYLQRSGTYKEIVLTTPKQLMEYYKSNSKNHSKLDSFGAGAFLVALLGECLGFQNGSEWLSMRKVFDSFFTHKAAVENFPVMIDYISEWIKDLDTEQISDIDPLQLVSDLPFTCIAKYLYGSELCSKQFLQALKDLIPMHTELMHYSFLTVAGRFKIFQYFPSKKMKQVSQFQRQFIDLSLKQVELSRQSGQETVVEKLYRHVESGKFTFNNWIQTIDEILFANIEVTSTVMAWALVEMGSNIEEQNRLRCEILKVKEQSSKDDFNKETDPMQRYMKLTDTYLQYCVWETLRMHPLLWFSFPEISSETLFIDGIRISPNTPIVVDQYQINYNSPIWNPSDKPKDFGKKFAPSRFENITLRDALYSQVTFGAGSRKCLGRNFAELLIKSELAYILSKYKVTLTEKVEFSKDTFVVQPKTKIQLTAL.

Residues 14 to 34 (WMAFVYFTPVLFVVLYLLKEW) form a helical membrane-spanning segment. N-linked (GlcNAc...) asparagine glycans are attached at residues N116, N141, and N442. C462 serves as a coordination point for heme.

It belongs to the cytochrome P450 family. It depends on heme as a cofactor.

It is found in the membrane. It participates in siderophore biosynthesis. In terms of biological role, cytochrome P450 monooxygenase; part of the PUL gene cluster that mediates the formation of pulcherrimin, a red iron-containing pigment composed of two cyclized and modified leucine molecules that acts as a siderophore, a chelator that binds iron outside the cell for subsequent uptake. Two leucine molecules are cyclized via a cyclodipeptide synthase, and the resulting diketopiperazine is oxidized by a cytochrome P450 monooxygenase to generate pulcherriminic acid (PA), which can then spontaneously bind iron to form pulcherrimin. The probable cyclodipeptide synthase PUL1 and the cytochrome P450 monooxygenase PUL2 encode the enzymes responsible for the two-step pulcherrimin biosynthesis pathway. The chain is Cytochrome P450 monooxygenase PUL2 from Kluyveromyces lactis (strain ATCC 8585 / CBS 2359 / DSM 70799 / NBRC 1267 / NRRL Y-1140 / WM37) (Yeast).